A 323-amino-acid polypeptide reads, in one-letter code: Trihelix transcription factor GT-3a (323 aa).

The span at 1-20 (MDRRNPFQHHHHHHQLHHHL) shows a compositional bias: basic residues. Positions 1-51 (MDRRNPFQHHHHHHQLHHHLIQQQQLPPPPLSTTATMDPGGGGGGGERIPQ) are disordered. A Myb-like domain is found at 52-108 (WSIEETKELLAIREELDQTFMETKRNKLLWEVVAAKMADKGFVRSAEQCKSKWKNLV). Disordered stretches follow at residues 147–176 (EATE…EPNQ), 190–220 (KRET…GTKA), and 269–297 (ELEE…ARAQ). Acidic residues predominate over residues 164 to 176 (SDDEEEEVDEPNQ).

As to quaternary structure, homodimer. Heterodimer with GT-3B. In terms of tissue distribution, predominantly expressed in roots and flower buds.

It is found in the nucleus. Functionally, probable transcription factor that binds specifically to the core DNA sequence 5'-GTTAC-3'. This chain is Trihelix transcription factor GT-3a (GT-3A), found in Arabidopsis thaliana (Mouse-ear cress).